The primary structure comprises 214 residues: NADH-ubiquinone oxidoreductase chain 5 (214 aa).

4 helical membrane-spanning segments follow: residues 14–34, 58–78, 92–112, and 192–212; these read LNTWALLLTLMATAFTATYSI, PLITAPLTRLALGSITAGMII, MPLITKTAAILMTILGIILAL, and TGLIKAYLGSFALSILVMILM.

The protein belongs to the complex I subunit 5 family.

The protein localises to the mitochondrion inner membrane. The catalysed reaction is a ubiquinone + NADH + 5 H(+)(in) = a ubiquinol + NAD(+) + 4 H(+)(out). Functionally, core subunit of the mitochondrial membrane respiratory chain NADH dehydrogenase (Complex I) that is believed to belong to the minimal assembly required for catalysis. Complex I functions in the transfer of electrons from NADH to the respiratory chain. The immediate electron acceptor for the enzyme is believed to be ubiquinone. This Anser caerulescens (Snow goose) protein is NADH-ubiquinone oxidoreductase chain 5 (MT-ND5).